The following is a 488-amino-acid chain: Inosine-5'-monophosphate dehydrogenase (488 aa).

2 consecutive CBS domains span residues 95–153 and 157–213; these read VITN…SIKI and MTKE…PHAA. NAD(+) contacts are provided by residues aspartate 250 and 300 to 302; that span reads GIG. K(+) is bound by residues glycine 302 and glycine 304. Serine 305 is a binding site for IMP. Cysteine 307 serves as a coordination point for K(+). Cysteine 307 serves as the catalytic Thioimidate intermediate. IMP is bound by residues 340–342, 363–364, and 387–391; these read DGG, GS, and YRGMG. Arginine 403 acts as the Proton acceptor in catalysis. Glutamate 417 contacts IMP. The segment at 467–488 is disordered; the sequence is AGLAESHPHNVQITKESPNYSF. 3 residues coordinate K(+): glutamate 471, serine 472, and histidine 473. Residues 475-488 show a composition bias toward polar residues; the sequence is HNVQITKESPNYSF.

Belongs to the IMPDH/GMPR family. Homotetramer. Requires K(+) as cofactor.

It catalyses the reaction IMP + NAD(+) + H2O = XMP + NADH + H(+). It participates in purine metabolism; XMP biosynthesis via de novo pathway; XMP from IMP: step 1/1. With respect to regulation, mycophenolic acid (MPA) is a non-competitive inhibitor that prevents formation of the closed enzyme conformation by binding to the same site as the amobile flap. In contrast, mizoribine monophosphate (MZP) is a competitive inhibitor that induces the closed conformation. MPA is a potent inhibitor of mammalian IMPDHs but a poor inhibitor of the bacterial enzymes. MZP is a more potent inhibitor of bacterial IMPDH. Catalyzes the conversion of inosine 5'-phosphate (IMP) to xanthosine 5'-phosphate (XMP), the first committed and rate-limiting step in the de novo synthesis of guanine nucleotides, and therefore plays an important role in the regulation of cell growth. The sequence is that of Inosine-5'-monophosphate dehydrogenase from Staphylococcus haemolyticus (strain JCSC1435).